Consider the following 426-residue polypeptide: Nucleolar protein 12 (426 aa).

Residues 26–128 are disordered; it reads QSSGPVDTLE…SKRASRPDMK (103 aa). The span at 87 to 105 shows a compositional bias: basic and acidic residues; that stretch reads LEEKYMQQVLKEDSDHESE. RRM domains are found at residues 137-251 and 259-339; these read RTVF…SVAH and RSVF…RCRN. Positions 401–415 are enriched in basic residues; the sequence is KARSKTGRVTKRSQA. The disordered stretch occupies residues 401-426; that stretch reads KARSKTGRVTKRSQAFKKAEANKKQK. Residues 417–426 show a composition bias toward basic and acidic residues; that stretch reads KKAEANKKQK.

Belongs to the RRM RBM34 family.

The protein localises to the nucleus. The protein resides in the nucleolus. Functionally, involved in pre-25S rRNA processing. In Eremothecium gossypii (strain ATCC 10895 / CBS 109.51 / FGSC 9923 / NRRL Y-1056) (Yeast), this protein is Nucleolar protein 12 (NOP12).